Reading from the N-terminus, the 824-residue chain is Vesicle-fusing ATPase (824 aa).

ATP-binding positions include 582-587 and 622-629; these read RGMIVW and AKTGKTSL. A Mg(2+)-binding site is contributed by T627.

This sequence belongs to the AAA ATPase family. In terms of assembly, homohexamer. Requires Mg(2+) as cofactor.

The protein resides in the cytoplasm. It carries out the reaction ATP + H2O = ADP + phosphate + H(+). Its function is as follows. Required for vesicle-mediated transport. Catalyzes the fusion of transport vesicles within the Golgi cisternae. Is also required for transport from the endoplasmic reticulum to the Golgi stack. Seems to function as a fusion protein required for the delivery of cargo proteins to all compartments of the Golgi stack independent of vesicle origin. The polypeptide is Vesicle-fusing ATPase (nsf-1) (Caenorhabditis elegans).